The sequence spans 395 residues: Succinyl-diaminopimelate desuccinylase (395 aa).

His-74 contributes to the Zn(2+) binding site. The active site involves Asp-76. Asp-107 contacts Zn(2+). Glu-141 functions as the Proton acceptor in the catalytic mechanism. The Zn(2+) site is built by Glu-142, Glu-170, and His-368.

It belongs to the peptidase M20A family. DapE subfamily. In terms of assembly, homodimer. Zn(2+) is required as a cofactor. Co(2+) serves as cofactor.

The enzyme catalyses N-succinyl-(2S,6S)-2,6-diaminopimelate + H2O = (2S,6S)-2,6-diaminopimelate + succinate. It functions in the pathway amino-acid biosynthesis; L-lysine biosynthesis via DAP pathway; LL-2,6-diaminopimelate from (S)-tetrahydrodipicolinate (succinylase route): step 3/3. Catalyzes the hydrolysis of N-succinyl-L,L-diaminopimelic acid (SDAP), forming succinate and LL-2,6-diaminopimelate (DAP), an intermediate involved in the bacterial biosynthesis of lysine and meso-diaminopimelic acid, an essential component of bacterial cell walls. The chain is Succinyl-diaminopimelate desuccinylase from Brucella melitensis biotype 2 (strain ATCC 23457).